A 155-amino-acid polypeptide reads, in one-letter code: 2-C-methyl-D-erythritol 2,4-cyclodiphosphate synthase (155 aa).

A divalent metal cation contacts are provided by aspartate 9 and histidine 11. 4-CDP-2-C-methyl-D-erythritol 2-phosphate contacts are provided by residues 9–11 and 35–36; these read DSH and HS. An a divalent metal cation-binding site is contributed by histidine 43. 4-CDP-2-C-methyl-D-erythritol 2-phosphate is bound at residue 57-59; the sequence is DIG.

Belongs to the IspF family. As to quaternary structure, homotrimer. A divalent metal cation is required as a cofactor.

It carries out the reaction 4-CDP-2-C-methyl-D-erythritol 2-phosphate = 2-C-methyl-D-erythritol 2,4-cyclic diphosphate + CMP. Its pathway is isoprenoid biosynthesis; isopentenyl diphosphate biosynthesis via DXP pathway; isopentenyl diphosphate from 1-deoxy-D-xylulose 5-phosphate: step 4/6. Functionally, involved in the biosynthesis of isopentenyl diphosphate (IPP) and dimethylallyl diphosphate (DMAPP), two major building blocks of isoprenoid compounds. Catalyzes the conversion of 4-diphosphocytidyl-2-C-methyl-D-erythritol 2-phosphate (CDP-ME2P) to 2-C-methyl-D-erythritol 2,4-cyclodiphosphate (ME-CPP) with a corresponding release of cytidine 5-monophosphate (CMP). This is 2-C-methyl-D-erythritol 2,4-cyclodiphosphate synthase from Koribacter versatilis (strain Ellin345).